The sequence spans 462 residues: Probable Xaa-Pro aminopeptidase NECHADRAFT_60613 (462 aa).

4 residues coordinate Mn(2+): aspartate 259, aspartate 270, glutamate 393, and glutamate 433.

It belongs to the peptidase M24B family. Mn(2+) serves as cofactor.

It carries out the reaction Release of any N-terminal amino acid, including proline, that is linked to proline, even from a dipeptide or tripeptide.. Catalyzes the removal of a penultimate prolyl residue from the N-termini of peptides. In Fusarium vanettenii (strain ATCC MYA-4622 / CBS 123669 / FGSC 9596 / NRRL 45880 / 77-13-4) (Fusarium solani subsp. pisi), this protein is Probable Xaa-Pro aminopeptidase NECHADRAFT_60613.